Consider the following 287-residue polypeptide: Kit ligand (287 aa).

The signal sequence occupies residues 1–25 (MKKAQTWIITCFCLQLLLLNPLVKT). The Extracellular portion of the chain corresponds to 26–225 (QSSCGNPVTD…LGFISSSSLQ (200 aa)). 2 disulfide bridges follow: cysteine 29-cysteine 117 and cysteine 68-cysteine 167. Asparagine 100, asparagine 106, asparagine 149, asparagine 178, asparagine 200, and asparagine 206 each carry an N-linked (GlcNAc...) asparagine glycan. Residues 226–246 (GISIALTSLLSLLIGFILGVI) form a helical membrane-spanning segment. Residues 247–287 (YWKKTHPKSRPESNETTQCHGCQEENEISMLQQKEKEHLQV) are Cytoplasmic-facing.

It belongs to the SCF family. As to quaternary structure, homodimer, non-covalently linked. Post-translationally, a soluble form is produced by proteolytic processing of isoform 1 in the extracellular domain.

It localises to the cell membrane. Its subcellular location is the secreted. It is found in the cytoplasm. The protein resides in the cytoskeleton. The protein localises to the cell projection. It localises to the lamellipodium. Its subcellular location is the filopodium. In terms of biological role, ligand for the receptor-type protein-tyrosine kinase KIT. Plays an essential role in the regulation of cell survival and proliferation, hematopoiesis, stem cell maintenance, gametogenesis, mast cell development, migration and function, and in melanogenesis. KITLG/SCF binding can activate several signaling pathways. Acts synergistically with other cytokines, probably interleukins. The sequence is that of Kit ligand (KITLG) from Coturnix japonica (Japanese quail).